Here is a 179-residue protein sequence, read N- to C-terminus: Large ribosomal subunit protein uL5c (179 aa).

The protein belongs to the universal ribosomal protein uL5 family. Part of the 50S ribosomal subunit; contacts the 5S rRNA.

The protein resides in the plastid. The protein localises to the organellar chromatophore. Binds 5S rRNA, forms part of the central protuberance of the 50S subunit. This is Large ribosomal subunit protein uL5c (rpl5) from Paulinella chromatophora.